The chain runs to 392 residues: Stilbene synthase 4 (392 aa).

55 to 58 (KFNR) contributes to the substrate binding site. Residue C164 is part of the active site. Substrate is bound by residues L267 and 305 to 307 (GGP).

The protein belongs to the thiolase-like superfamily. Chalcone/stilbene synthases family. As to quaternary structure, homodimer.

The protein localises to the cytoplasm. It catalyses the reaction 4-coumaroyl-CoA + 3 malonyl-CoA + 3 H(+) = trans-resveratrol + 4 CO2 + 4 CoA. It functions in the pathway phytoalexin biosynthesis; 3,4',5-trihydroxystilbene biosynthesis; 3,4',5-trihydroxystilbene from trans-4-coumarate: step 2/2. Functionally, mediates resistance to pathogens which are sensitive to stilbenes. In Vitis vinifera (Grape), this protein is Stilbene synthase 4.